The primary structure comprises 183 residues: Shikimate kinase (183 aa).

15–20 contacts ATP; sequence GSGKST. S19 contributes to the Mg(2+) binding site. 3 residues coordinate substrate: D37, R61, and G85. Residue R123 coordinates ATP. R142 is a substrate binding site.

The protein belongs to the shikimate kinase family. In terms of assembly, monomer. The cofactor is Mg(2+).

It localises to the cytoplasm. The catalysed reaction is shikimate + ATP = 3-phosphoshikimate + ADP + H(+). Its pathway is metabolic intermediate biosynthesis; chorismate biosynthesis; chorismate from D-erythrose 4-phosphate and phosphoenolpyruvate: step 5/7. Catalyzes the specific phosphorylation of the 3-hydroxyl group of shikimic acid using ATP as a cosubstrate. The chain is Shikimate kinase from Paracidovorax citrulli (strain AAC00-1) (Acidovorax citrulli).